A 526-amino-acid chain; its full sequence is Transcription factor MYC1 (526 aa).

The segment at 330–351 (MFPSQNSGLNQDDPSDRRKENE) is disordered. Polar residues predominate over residues 332-341 (PSQNSGLNQD). The bHLH domain maps to 333 to 382 (SQNSGLNQDDPSDRRKENEKFSVLRTMVPTVNEVDKESILNNTIKYLQEL).

As to quaternary structure, homodimer. Interacts with MYB75/PAP1, MYB90/PAP2, MYB4, MYB5, MYB6, MYB23, MYB82, MYB113, MYB114, TT2, MYB0/GL1, and MYB66/WER. In terms of tissue distribution, mostly expressed in developing seeds. Also detected in stems and leaves.

The protein localises to the nucleus. Its function is as follows. Trancsription activator, when associated with MYB75/PAP1 or MYB90/PAP2. This Arabidopsis thaliana (Mouse-ear cress) protein is Transcription factor MYC1 (BHLH12).